The primary structure comprises 132 residues: Small ribosomal subunit protein uS8 (132 aa).

It belongs to the universal ribosomal protein uS8 family. In terms of assembly, part of the 30S ribosomal subunit. Contacts proteins S5 and S12.

Functionally, one of the primary rRNA binding proteins, it binds directly to 16S rRNA central domain where it helps coordinate assembly of the platform of the 30S subunit. The polypeptide is Small ribosomal subunit protein uS8 (Corynebacterium efficiens (strain DSM 44549 / YS-314 / AJ 12310 / JCM 11189 / NBRC 100395)).